Reading from the N-terminus, the 187-residue chain is Flavin prenyltransferase UbiX (187 aa).

FMN is bound by residues 9–11, Ser34, and Arg123; that span reads GAS. 2 residues coordinate dimethylallyl phosphate: Tyr153 and Lys169.

This sequence belongs to the UbiX/PAD1 family.

The enzyme catalyses dimethylallyl phosphate + FMNH2 = prenylated FMNH2 + phosphate. Functionally, flavin prenyltransferase that catalyzes the synthesis of the prenylated FMN cofactor (prenyl-FMN) for 4-hydroxy-3-polyprenylbenzoic acid decarboxylase UbiD. The prenyltransferase is metal-independent and links a dimethylallyl moiety from dimethylallyl monophosphate (DMAP) to the flavin N5 and C6 atoms of FMN. The chain is Flavin prenyltransferase UbiX from Helicobacter pylori (strain J99 / ATCC 700824) (Campylobacter pylori J99).